The following is a 132-amino-acid chain: Fertilization-influencing membrane protein (132 aa).

Residues 100-120 form a helical membrane-spanning segment; the sequence is PGLFHHILVGLLVVAFFFLLF.

In terms of tissue distribution, testis-specific.

The protein resides in the cell membrane. May play a role in sperm-oocyte fusion during fertilization. The protein is Fertilization-influencing membrane protein of Homo sapiens (Human).